The sequence spans 335 residues: Serpentine receptor class alpha-13 (335 aa).

The Extracellular segment spans residues 1 to 25; the sequence is MAIISSVNRTCASESLLELYRSYKY. Residues 26–46 form a helical membrane-spanning segment; sequence ILSTSFNIIIPIISLFFLVYA. The Cytoplasmic portion of the chain corresponds to 47-61; sequence IKQLCAQSIIQYSTR. A helical transmembrane segment spans residues 62 to 82; the sequence is VLLITTILFAVCHQIAYFCFK. Over 83 to 108 the chain is Extracellular; the sequence is ADLLYTMLFKLDQPCNLQHSSYDCRF. Residues 109-129 form a helical membrane-spanning segment; sequence ITIATTTSNCGMALVQLAMSI. The Cytoplasmic portion of the chain corresponds to 130-146; that stretch reads DRVFALKFNRVYYKLKS. Residues 147 to 167 form a helical membrane-spanning segment; that stretch reads IPGITLALITLSISFSMFFIL. Topologically, residues 168 to 192 are extracellular; the sequence is TIDDPLSGYVNHCGFYPTYSQDKFH. A helical transmembrane segment spans residues 193–213; that stretch reads IFLDVTLYLAVFNFVFDIGLM. The Cytoplasmic segment spans residues 214–243; the sequence is YYSYQEILWKRSYSFVNRFQSRISLKCTQA. Residues 244-264 form a helical membrane-spanning segment; the sequence is IFIISICQCISNVLYSGLLSL. The Extracellular segment spans residues 265–278; the sequence is LMKLGRYMSSADYN. Residues 279-299 form a helical membrane-spanning segment; it reads LSLSLAYTTPYSCLILPILIC. The Cytoplasmic segment spans residues 300–335; it reads KVLEYIKKQRTVGILSLRNQKQSMEGHMAMINSAWK.

It belongs to the nematode receptor-like protein sra family. As to expression, expressed in the AWA and AWC chemosensory neurons.

Its subcellular location is the membrane. Functionally, chemosensory receptor that negatively regulates RAS/MAPK signaling during vulva induction and the negative regulation of olfaction of volitile attractants. Required for the suppression of vulval induction in response to food starvation. Signaling acts through the GPA-5 G-alpha protein subunit. The polypeptide is Serpentine receptor class alpha-13 (sra-13) (Caenorhabditis elegans).